The following is a 446-amino-acid chain: MPTDVLTVCPAPTGTTWVIQSEGYLQGKTTIPGDKSISHRALMLGALASGETTIQGLLLGEDPRSTAHCFRALGAEISELNTEHVRVQGIGLGHLLEPDVVLDAGNSGTTLRLMLGILASHPDRLFTVTGDTSLCSRPMGRVIKPLQQMGAHIWGRQSDTLAPLAIRGQQLQPIHYPSPIASAQVKSCIMFAGLMAEGQTTITEPALSRDHSERMFAAFGANIIVDPDTCSVTVTGPAQLHGQAIIVPGDISSAAFWLVAAAIVPGSDIWIENVGVNPTRTGVLEVLEQMGAKMTLANQRTVAGEPVADIHIQHSQLHGTVIEGAVIPRLVDEVPILAVAALFAQGPTTIRDAAELRVKESDRLTAMATQLQKMGANITEQPDGLEIQGGASLQGADVDSFGDHRVGMSLAIAALNATGSTTIHRAEAAAISYPNFVATLQQLWHS.

Lysine 35, serine 36, and arginine 40 together coordinate 3-phosphoshikimate. Residue lysine 35 participates in phosphoenolpyruvate binding. Residues glycine 108 and arginine 137 each coordinate phosphoenolpyruvate. Serine 182, glutamine 184, aspartate 332, and lysine 359 together coordinate 3-phosphoshikimate. Residue glutamine 184 coordinates phosphoenolpyruvate. Aspartate 332 (proton acceptor) is an active-site residue. Positions 363 and 405 each coordinate phosphoenolpyruvate.

This sequence belongs to the EPSP synthase family. Monomer.

The protein localises to the cytoplasm. The catalysed reaction is 3-phosphoshikimate + phosphoenolpyruvate = 5-O-(1-carboxyvinyl)-3-phosphoshikimate + phosphate. Its pathway is metabolic intermediate biosynthesis; chorismate biosynthesis; chorismate from D-erythrose 4-phosphate and phosphoenolpyruvate: step 6/7. Functionally, catalyzes the transfer of the enolpyruvyl moiety of phosphoenolpyruvate (PEP) to the 5-hydroxyl of shikimate-3-phosphate (S3P) to produce enolpyruvyl shikimate-3-phosphate and inorganic phosphate. This is 3-phosphoshikimate 1-carboxyvinyltransferase from Acaryochloris marina (strain MBIC 11017).